The chain runs to 125 residues: Glycine cleavage system H protein (125 aa).

Positions 21-103 (SVTIGISNQA…YSAGWIVKIK (83 aa)) constitute a Lipoyl-binding domain. K62 carries the post-translational modification N6-lipoyllysine.

Belongs to the GcvH family. In terms of assembly, the glycine cleavage system is composed of four proteins: P, T, L and H. It depends on (R)-lipoate as a cofactor.

In terms of biological role, the glycine cleavage system catalyzes the degradation of glycine. The H protein shuttles the methylamine group of glycine from the P protein to the T protein. This is Glycine cleavage system H protein from Psychromonas ingrahamii (strain DSM 17664 / CCUG 51855 / 37).